Consider the following 382-residue polypeptide: Pentatricopeptide repeat-containing protein 2, mitochondrial (382 aa).

The PPR repeat unit spans residues 159-193 (TSFNILMDMLFTKGQYERAVEVLVEMRNQRVRFSK).

Belongs to the PTCD2 family.

The protein localises to the mitochondrion. Its function is as follows. May be involved in mitochondrial RNA maturation and mitochondrial respiratory chain function. This is Pentatricopeptide repeat-containing protein 2, mitochondrial (ptcd2) from Xenopus laevis (African clawed frog).